The following is a 185-amino-acid chain: Elongation factor P (185 aa).

Belongs to the elongation factor P family.

The protein resides in the cytoplasm. It functions in the pathway protein biosynthesis; polypeptide chain elongation. Its function is as follows. Involved in peptide bond synthesis. Stimulates efficient translation and peptide-bond synthesis on native or reconstituted 70S ribosomes in vitro. Probably functions indirectly by altering the affinity of the ribosome for aminoacyl-tRNA, thus increasing their reactivity as acceptors for peptidyl transferase. This Mesomycoplasma hyopneumoniae (strain J / ATCC 25934 / NCTC 10110) (Mycoplasma hyopneumoniae) protein is Elongation factor P.